The primary structure comprises 122 residues: Large ribosomal subunit protein uL14 (122 aa).

It belongs to the universal ribosomal protein uL14 family. In terms of assembly, part of the 50S ribosomal subunit. Forms a cluster with proteins L3 and L19. In the 70S ribosome, L14 and L19 interact and together make contacts with the 16S rRNA in bridges B5 and B8.

Its function is as follows. Binds to 23S rRNA. Forms part of two intersubunit bridges in the 70S ribosome. The protein is Large ribosomal subunit protein uL14 of Corynebacterium efficiens (strain DSM 44549 / YS-314 / AJ 12310 / JCM 11189 / NBRC 100395).